Here is a 68-residue protein sequence, read N- to C-terminus: Serine palmitoyltransferase small subunit A (68 aa).

Residues 1–9 (MALARAWKQ) are Cytoplasmic-facing. Residues 10-26 (MSWFYYQYLLVTALYML) traverse the membrane as a helical segment. The Lumenal portion of the chain corresponds to 27 to 31 (EPWER). A helical transmembrane segment spans residues 32–54 (TVFNSMLVSIVGMALYTGYVFMP). Over 55-68 (QHIMAILHYFEIVQ) the chain is Cytoplasmic.

It belongs to the SPTSS family. SPTSSA subfamily. In terms of assembly, component of the serine palmitoyltransferase (SPT) complex, which is composed of SPTLC1, SPTLC2 or SPTLC3 and SPTSSA or SPTSSB. The heterodimer consisting of SPTLC1 and SPTLC2/SPTLC3 forms the catalytic core of the enzyme, while SPTSSA or SPTSSB subunits determine substrate specificity. SPT also interacts with ORMDL proteins, especially ORMDL3, which negatively regulate SPT activity in the presence of ceramides. Interacts with MBOAT7; the interaction plays a role in MBOAT7 localization to mitochondria-associated membranes.

It localises to the endoplasmic reticulum membrane. Its pathway is lipid metabolism; sphingolipid metabolism. Its function is as follows. Component of the serine palmitoyltransferase multisubunit enzyme (SPT) that catalyzes the initial and rate-limiting step in sphingolipid biosynthesis by condensing L-serine and activated acyl-CoA (most commonly palmitoyl-CoA) to form long-chain bases. The SPT complex is composed of SPTLC1, SPTLC2 or SPTLC3 and SPTSSA or SPTSSB. Within this complex, the heterodimer consisting of SPTLC1 and SPTLC2/SPTLC3 forms the catalytic core. Within the SPT complex, SPTSSA stimulates the catalytic activity and plays a role in substrate specificity, which depends upon the overall complex composition. The SPTLC1-SPTLC2-SPTSSA complex shows a strong preference for C16-CoA substrate, while the SPTLC1-SPTLC3-SPTSSA isozyme uses both C14-CoA and C16-CoA as substrates, with a slight preference for C14-CoA. Independently of its action as a SPT component, may be involved in MBOAT7 localization to mitochondria-associated membranes, a membrane bridge between the endoplasmic reticulum and mitochondria, may hence affect MBOAT7-catalyzed incorporation of arachidonic acid into phosphatidylinositol. The sequence is that of Serine palmitoyltransferase small subunit A (SPTSSA) from Bos taurus (Bovine).